Here is a 352-residue protein sequence, read N- to C-terminus: Glycogen synthase kinase 3 (352 aa).

The 291-residue stretch at 20–310 folds into the Protein kinase domain; that stretch reads YTVERVAGQG…PLDALCHPFF (291 aa). Residues 26–34 and K49 each bind ATP; that span reads AGQGTFGTV. D152 functions as the Proton acceptor in the catalytic mechanism.

It belongs to the protein kinase superfamily. CMGC Ser/Thr protein kinase family. GSK-3 subfamily. Inhibited by cyclin kinase 2 (CDK2) inhibitors, including GW8510.

The catalysed reaction is L-seryl-[tau protein] + ATP = O-phospho-L-seryl-[tau protein] + ADP + H(+). It carries out the reaction L-threonyl-[tau protein] + ATP = O-phospho-L-threonyl-[tau protein] + ADP + H(+). The polypeptide is Glycogen synthase kinase 3 (Trypanosoma brucei brucei (strain 927/4 GUTat10.1)).